A 1312-amino-acid polypeptide reads, in one-letter code: MSAIYKLSIQGIRSFDSNDRETIEFGKPLTLIVGMNGSGKTTIIECLKYATTGDLPPNSKGGVFIHDPKITGEKDIRAQVKLAFTSANGLNMIVTRNIQLLMKKTTTTFKTLEGQLVAINNSGDRSTLSTRSLELDAQVPLYLGVPKAILEYVIFCHQEDSLWPLSEPSNLKKKFDEIFQAMKFTKALDNLKSIKKDMSVDIKLLKQSVEHLKLDKDRSKAMKLNIHQLQTKIDQYNEEVSEIESQLNEITEKSDKLFKSNQDFQKILSKVENLKNTKLSISDQVKRLSNSIDILDLSKPDLQNLLANFSKVLMDKNNQLRDLETDISSLKDRQSSLQSLSNSLIRRQGELEAGKETYEKNRNHLSSLKEAFQHKFQGLSNIENSDMAQVNHEMSQFKAFISQDLTDTIDQFAKDIQLKETNLSDLIKSITVDSQNLEYNKKDRSKLIHDSEELAEKLKSFKSLSTQDSLNHELENLKTYKEKLQSWESENIIPKLNQKIEEKNNEMIILENQIEKFQDRIMKTNQQADLYAKLGLIKKSINTKLDELQKITEKLQNDSRIRQVFPLTQEFQRADLEMDFQKLFINMQKNIAINNKKMHELDRRYTNALYNLNTIEKDLQDNQKSKEKVIQLLSENLPEDCTIDEYNDVLEETELSYKTALENLKMHQTTLEFNRKALEIAERDSCCYLCSRKFENESFKSKLLQELKTKTDANFEKTLKDTVQNEKEYLHSLRLLEKHIITLNSINEKIDNSQKCLEKAKEETKTSKSKLDELEVDSTKLKDEKELAESEIRPLIEKFTYLEKELKDLENSSKTISEELSIYNTSEDGIQTVDELRDQQRKMNDSLRELRKTISDLQMEKDEKVRENSRMINLIKEKELTVSEIESSLTQKQNIDDSIRSKRENINDIDSRVKELEARIISLKNKKDEAQSVLDKVKNERDIQVRNKQKTVADINRLIDRFQTIYNEVVDFEAKGFDELQTTIKELELNKAQMLELKEQLDLKSNEVNEEKRKLADSNNEEKNLKQNLELIELKSQLQHIESEISRLDVQNAEAERDKYQEESLRLRTRFEKLSSENAGKLGEMKQLQNQIDSLTHQLRTDYKDIEKNYHKEWVELQTRSFVTDDIDVYSKALDSAIMKYHGLKMQDINRIIDELWKRTYSGTDIDTIKIRSDEVSSTVKGKSYNYRVVMYKQDVELDMRGRCSAGQKVLASIIIRLALSETFGANCGVIALDEPTTNLDEENIESLAKSLHNIINMRRHQKNFQLIVITHDEKFLGHMNAAAFTDHFFKVKRDDRQKSQIEWVDINRVTY.

Arg13, Asn36, Gly37, Gly39, Lys40, Thr41, Thr42, Ile65, Asp67, and Gln158 together coordinate ATP. Thr41 serves as a coordination point for Mg(2+). Gln158 is a binding site for Mg(2+). Coiled coils occupy residues 185 to 347 (TKAL…LIRR) and 403 to 558 (QDLT…LQND). Ser469 bears the Phosphoserine mark. Position 568 is a phosphothreonine (Thr568). Positions 640–678 (DCTIDEYNDVLEETELSYKTALENLKMHQTTLEFNRKAL) form a coiled coil. The region spanning 640 to 741 (DCTIDEYNDV…SLRLLEKHII (102 aa)) is the Zinc-hook domain. Zn(2+) is bound by residues Cys687 and Cys690. 2 coiled-coil regions span residues 712-741 (DANFEKTLKDTVQNEKEYLHSLRLLEKHII) and 787-1108 (LAES…DIEK).

This sequence belongs to the SMC family. RAD50 subfamily. In terms of assembly, component of the MRN complex composed of two heterodimers RAD50 and MRE11 associated with a single XRS2. The MRN complexes dimerize on DNA to form joined MRN-MRN oligomers required for DNA double-strand break repair. Zn(2+) serves as cofactor.

Its subcellular location is the nucleus. It is found in the chromosome. It carries out the reaction ATP + H2O = ADP + phosphate + H(+). In terms of biological role, component of the MRN complex, which plays a central role in double-strand break (DSB) repair, DNA recombination, maintenance of telomere integrity and meiosis. The MRN complex is involved in the repair of DNA double-strand breaks (DSBs) via homologous recombination (HR), an error-free mechanism which primarily occurs during S and G2 phases. The complex (1) mediates the end resection of damaged DNA, which generates proper single-stranded DNA, a key initial steps in HR, and is (2) required for the recruitment of other repair factors and efficient activation of TEL1/ATM and ATR upon DNA damage. The MRN complex possesses single-strand endonuclease activity and double-strand-specific 3'-5' exonuclease activity, which are provided by MRE11, to initiate end resection, which is required for single-strand invasion and recombination. Within the complex, RAD50 is both required to bind DNA ends and hold them in close proximity and regulate the activity of MRE11. RAD50 provides an ATP-dependent control of MRE11 by positioning DNA ends into the MRE11 active site: ATP-binding induces a large structural change from an open form with accessible MRE11 nuclease sites into a closed form. The MRN complex is also required for the processing of R-loops. This is DNA repair protein RAD50 from Saccharomyces cerevisiae (strain ATCC 204508 / S288c) (Baker's yeast).